The primary structure comprises 696 residues: Elongation factor G (696 aa).

Residues E8–A290 enclose the tr-type G domain. GTP is bound by residues A17–T24, D88–H92, and N142–D145.

Belongs to the TRAFAC class translation factor GTPase superfamily. Classic translation factor GTPase family. EF-G/EF-2 subfamily.

It is found in the cytoplasm. Functionally, catalyzes the GTP-dependent ribosomal translocation step during translation elongation. During this step, the ribosome changes from the pre-translocational (PRE) to the post-translocational (POST) state as the newly formed A-site-bound peptidyl-tRNA and P-site-bound deacylated tRNA move to the P and E sites, respectively. Catalyzes the coordinated movement of the two tRNA molecules, the mRNA and conformational changes in the ribosome. The sequence is that of Elongation factor G from Nitrosospira multiformis (strain ATCC 25196 / NCIMB 11849 / C 71).